A 485-amino-acid chain; its full sequence is Endo-1,4-beta-xylanase C (485 aa).

The first 19 residues, 1–19 (MKFLQIIPVLLSLTSTTLA), serve as a signal peptide directing secretion. One can recognise a GH11 domain in the interval 34 to 234 (KETGNKVGTI…GNGGVSGTAD (201 aa)). 2 N-linked (GlcNAc...) asparagine glycosylation sites follow: N56 and N107. E128 functions as the Nucleophile in the catalytic mechanism. N175 carries an N-linked (GlcNAc...) asparagine glycan. E221 acts as the Proton donor in catalysis. A disordered region spans residues 250-450 (ASPAPAGGAP…PQNASDGGNC (201 aa)). Low complexity-rich tracts occupy residues 265–330 (AGND…QGQH) and 344–354 (GSDFNNWSQGG). 7 consecutive repeat copies span residues 275-280 (GQQPPQ), 281-286 (GQQPPQ), 287-292 (GQQPPQ), 293-298 (GQQPPQ), 299-304 (GQQPPQ), 310-315 (GQQPPQ), and 316-321 (GQQPPQ). Residues 275-321 (GQQPPQGQQPPQGQQPPQGQQPPQGQQPPQGNDQQGQQPPQGQQPPQ) form a 7 X 6 AA tandem repeats of G-Q-Q-P-P-Q region. N-linked (GlcNAc...) asparagine glycosylation is present at N349. Repeat copies occupy residues 353–361 (GGSPWGGNQ), 362–370 (GGSPWGGNQ), 371–379 (GGNPWGGNQ), 380–388 (GGSPWGGNQ), 389–397 (GGSPWGQGN), 399–407 (GGNPWGGNQ), 408–416 (GGSPWGGNQ), and 417–425 (GGNPWGGNQ). The tract at residues 353-425 (GGSPWGGNQG…QGGNPWGGNQ (73 aa)) is 8 X 9 AA tandem repeats of G-G-[SN]-P-W-G-G-N-Q. The segment covering 355–425 (SPWGGNQGGS…QGGNPWGGNQ (71 aa)) has biased composition (gly residues). Low complexity predominate over residues 426–445 (WGAPQNAAAPQSAAAPQNAS). The N-linked (GlcNAc...) asparagine glycan is linked to N443. The region spanning 449 to 484 (NCASLWGQCGGQGYNGPSCCSEGSCKPINEYFHQCQ) is the CBM1 domain.

The protein belongs to the glycosyl hydrolase 11 (cellulase G) family.

Its subcellular location is the secreted. It carries out the reaction Endohydrolysis of (1-&gt;4)-beta-D-xylosidic linkages in xylans.. The protein operates within glycan degradation; xylan degradation. Endo-1,4-beta-xylanase involved in the hydrolysis of xylan, a major structural heterogeneous polysaccharide found in plant biomass representing the second most abundant polysaccharide in the biosphere, after cellulose. The protein is Endo-1,4-beta-xylanase C (xynC) of Neocallimastix patriciarum (Rumen fungus).